The chain runs to 204 residues: Small ribosomal subunit protein uS4 (204 aa).

The tract at residues Met-1 to Ser-46 is disordered. The 64-residue stretch at Arg-94–Gln-157 folds into the S4 RNA-binding domain.

It belongs to the universal ribosomal protein uS4 family. As to quaternary structure, part of the 30S ribosomal subunit. Contacts protein S5. The interaction surface between S4 and S5 is involved in control of translational fidelity.

In terms of biological role, one of the primary rRNA binding proteins, it binds directly to 16S rRNA where it nucleates assembly of the body of the 30S subunit. Functionally, with S5 and S12 plays an important role in translational accuracy. In Zymomonas mobilis subsp. mobilis (strain ATCC 31821 / ZM4 / CP4), this protein is Small ribosomal subunit protein uS4.